Reading from the N-terminus, the 120-residue chain is Glycine cleavage system H protein (120 aa).

Positions 17–99 (VATVGITNYA…QGAGWFFKLK (83 aa)) constitute a Lipoyl-binding domain. The residue at position 58 (Lys58) is an N6-lipoyllysine.

Belongs to the GcvH family. As to quaternary structure, the glycine cleavage system is composed of four proteins: P, T, L and H. (R)-lipoate serves as cofactor.

The glycine cleavage system catalyzes the degradation of glycine. The H protein shuttles the methylamine group of glycine from the P protein to the T protein. The chain is Glycine cleavage system H protein from Rhizobium leguminosarum bv. trifolii (strain WSM2304).